The following is a 281-amino-acid chain: NADH-quinone oxidoreductase subunit B (281 aa).

Cys-37, Cys-38, Cys-103, and Cys-132 together coordinate [4Fe-4S] cluster. A disordered region spans residues 242–281 (DAKPLDESRAHGPGPTTADIADAADTADSDAAPGATHDTP). The segment covering 257–281 (TTADIADAADTADSDAAPGATHDTP) has biased composition (low complexity).

Belongs to the complex I 20 kDa subunit family. As to quaternary structure, NDH-1 is composed of 14 different subunits. Subunits NuoB, C, D, E, F, and G constitute the peripheral sector of the complex. [4Fe-4S] cluster serves as cofactor.

It is found in the cell membrane. It carries out the reaction a quinone + NADH + 5 H(+)(in) = a quinol + NAD(+) + 4 H(+)(out). Functionally, NDH-1 shuttles electrons from NADH, via FMN and iron-sulfur (Fe-S) centers, to quinones in the respiratory chain. The immediate electron acceptor for the enzyme in this species is believed to be a menaquinone. Couples the redox reaction to proton translocation (for every two electrons transferred, four hydrogen ions are translocated across the cytoplasmic membrane), and thus conserves the redox energy in a proton gradient. The chain is NADH-quinone oxidoreductase subunit B from Frankia alni (strain DSM 45986 / CECT 9034 / ACN14a).